A 505-amino-acid chain; its full sequence is DDB1- and CUL4-associated factor 17 (505 aa).

2 consecutive transmembrane segments (helical) span residues 186–206 and 222–242; these read VLLYLAVFRVLPFSLVGILEI and GILIVMYSSGLVRLYSFQAII.

Interacts with DDB1, CUL4A and CUL4B.

Its subcellular location is the membrane. The protein resides in the nucleus. It is found in the nucleolus. It functions in the pathway protein modification; protein ubiquitination. In terms of biological role, may function as a substrate receptor for CUL4-DDB1 E3 ubiquitin-protein ligase complex. The protein is DDB1- and CUL4-associated factor 17 (Dcaf17) of Rattus norvegicus (Rat).